The following is a 241-amino-acid chain: Small ribosomal subunit protein eS4 (241 aa).

Positions 37–99 (IPLGLLLRDY…ADLYLRIVPD (63 aa)) constitute an S4 RNA-binding domain.

It belongs to the eukaryotic ribosomal protein eS4 family.

In Metallosphaera sedula (strain ATCC 51363 / DSM 5348 / JCM 9185 / NBRC 15509 / TH2), this protein is Small ribosomal subunit protein eS4.